A 303-amino-acid polypeptide reads, in one-letter code: Probable 5-dehydro-4-deoxyglucarate dehydratase (303 aa).

It belongs to the DapA family.

It catalyses the reaction 5-dehydro-4-deoxy-D-glucarate + H(+) = 2,5-dioxopentanoate + CO2 + H2O. It functions in the pathway carbohydrate acid metabolism; D-glucarate degradation; 2,5-dioxopentanoate from D-glucarate: step 2/2. In Acinetobacter baumannii (strain AB307-0294), this protein is Probable 5-dehydro-4-deoxyglucarate dehydratase.